A 273-amino-acid chain; its full sequence is Large ribosomal subunit protein uL2 (273 aa).

Disordered stretches follow at residues 35–54 and 222–273; these read DKKD…TRHI and GMAM…RRNK. Basic and acidic residues predominate over residues 229–239; the sequence is DHPHGGGEGRN. A compositionally biased stretch (basic residues) spans 253-273; it reads KGFKTRKNKRTDKYIVRRRNK.

It belongs to the universal ribosomal protein uL2 family. In terms of assembly, part of the 50S ribosomal subunit. Forms a bridge to the 30S subunit in the 70S ribosome.

Its function is as follows. One of the primary rRNA binding proteins. Required for association of the 30S and 50S subunits to form the 70S ribosome, for tRNA binding and peptide bond formation. It has been suggested to have peptidyltransferase activity; this is somewhat controversial. Makes several contacts with the 16S rRNA in the 70S ribosome. The chain is Large ribosomal subunit protein uL2 from Aeromonas hydrophila subsp. hydrophila (strain ATCC 7966 / DSM 30187 / BCRC 13018 / CCUG 14551 / JCM 1027 / KCTC 2358 / NCIMB 9240 / NCTC 8049).